The sequence spans 325 residues: Clavaminate synthase 2 (325 aa).

Histidine 145, glutamate 147, and histidine 280 together coordinate Fe cation. Arginine 294 serves as a coordination point for 2-oxoglutarate.

The protein belongs to the clavaminate synthase family. Fe(2+) serves as cofactor.

It catalyses the reaction deoxyamidinoproclavaminate + 2-oxoglutarate + O2 = amidinoproclavaminate + succinate + CO2. It carries out the reaction proclavaminate + 2-oxoglutarate + O2 = dihydroclavaminate + succinate + CO2 + H2O. The enzyme catalyses dihydroclavaminate + 2-oxoglutarate + O2 = clavaminate + succinate + CO2 + H2O. The protein operates within antibiotic biosynthesis; clavulanate biosynthesis; clavulanate from D-glyceraldehyde 3-phosphate and L-arginine: step 3/8. It participates in antibiotic biosynthesis; clavulanate biosynthesis; clavulanate from D-glyceraldehyde 3-phosphate and L-arginine: step 5/8. It functions in the pathway antibiotic biosynthesis; clavulanate biosynthesis; clavulanate from D-glyceraldehyde 3-phosphate and L-arginine: step 6/8. This chain is Clavaminate synthase 2 (cs2), found in Streptomyces clavuligerus.